We begin with the raw amino-acid sequence, 237 residues long: Small ribosomal subunit protein eS4 (237 aa).

Residues 37–99 (VPLLIVLRDV…REEYYRIFPD (63 aa)) enclose the S4 RNA-binding domain.

This sequence belongs to the eukaryotic ribosomal protein eS4 family.

This chain is Small ribosomal subunit protein eS4, found in Natronomonas pharaonis (strain ATCC 35678 / DSM 2160 / CIP 103997 / JCM 8858 / NBRC 14720 / NCIMB 2260 / Gabara) (Halobacterium pharaonis).